Here is a 570-residue protein sequence, read N- to C-terminus: Urease subunit alpha (570 aa).

A Urease domain is found at 131–570 (GGFDAHIHFI…LPMAQRYFLF (440 aa)). Positions 136, 138, and 219 each coordinate Ni(2+). Lysine 219 bears the N6-carboxylysine mark. Histidine 221 lines the substrate pocket. Ni(2+) is bound by residues histidine 248 and histidine 274. Histidine 322 (proton donor) is an active-site residue. A Ni(2+)-binding site is contributed by aspartate 362.

It belongs to the metallo-dependent hydrolases superfamily. Urease alpha subunit family. Heterotrimer of UreA (gamma), UreB (beta) and UreC (alpha) subunits. Three heterotrimers associate to form the active enzyme. Ni cation is required as a cofactor. In terms of processing, carboxylation allows a single lysine to coordinate two nickel ions.

The protein localises to the cytoplasm. It catalyses the reaction urea + 2 H2O + H(+) = hydrogencarbonate + 2 NH4(+). The protein operates within nitrogen metabolism; urea degradation; CO(2) and NH(3) from urea (urease route): step 1/1. This is Urease subunit alpha from Chelativorans sp. (strain BNC1).